A 583-amino-acid chain; its full sequence is Multidrug transporter QDR2 (583 aa).

The interval 23-46 (EKYDGPDLSEVDSEDNDKMIKTNE) is disordered. The N-linked (GlcNAc...) asparagine glycan is linked to asparagine 60. A helical transmembrane segment spans residues 88 to 108 (AYTGLFSTMAGAIYYPVLSVI). The N-linked (GlcNAc...) asparagine glycan is linked to asparagine 120. 5 helical membrane passes run 121–141 (ITVV…GGLA), 148–168 (PVVL…ACAQ), 178–198 (CLQA…IGDV), 208–228 (VGYI…IGAG), and 238–258 (IFWF…IMLP). Residue asparagine 267 is glycosylated (N-linked (GlcNAc...) asparagine). 2 consecutive transmembrane segments (helical) span residues 323–342 (ILLV…QTAL) and 354–374 (VAKI…SIVT). N-linked (GlcNAc...) asparagine glycosylation is present at asparagine 380. 4 helical membrane passes run 432 to 452 (HAAF…GWCI), 458 to 478 (LASV…ILTF), 493 to 513 (TATG…IGCL), and 524 to 544 (GVFT…FYLL).

This sequence belongs to the major facilitator superfamily. CAR1 family.

It localises to the cell membrane. Multidrug resistance transporter involved in resistance to the antifungal drugs miconazole, tioconazole, clotrimazole, and ketoconazole; as well as to quinidine. Decreases the intracellular accumulation of clotrimazole in and plays a role in the extrusion of this antifungal from preloaded cells. The protein is Multidrug transporter QDR2 of Candida glabrata (strain ATCC 2001 / BCRC 20586 / JCM 3761 / NBRC 0622 / NRRL Y-65 / CBS 138) (Yeast).